A 211-amino-acid polypeptide reads, in one-letter code: Thymidylate kinase (211 aa).

ATP is bound at residue 11–18; the sequence is GPDGAGKT.

Belongs to the thymidylate kinase family.

The enzyme catalyses dTMP + ATP = dTDP + ADP. In terms of biological role, phosphorylation of dTMP to form dTDP in both de novo and salvage pathways of dTTP synthesis. The polypeptide is Thymidylate kinase (Streptococcus equi subsp. zooepidemicus (strain H70)).